Here is a 65-residue protein sequence, read N- to C-terminus: Antitoxin VapB32 (65 aa).

A disordered region spans residues 46 to 65 (ALGGTDPQATAAPRRRTSPR).

In terms of biological role, antitoxin component of a type II toxin-antitoxin (TA) system. The polypeptide is Antitoxin VapB32 (vapB32) (Mycobacterium tuberculosis (strain CDC 1551 / Oshkosh)).